The primary structure comprises 795 residues: uncharacterized protein (795 aa).

A coiled-coil region spans residues 228-280; it reads NIICFKNKCKNNEKEKKEEEEDHDHDHDDKKKEKEDKEKEEEEEEEDSNDDFE. 4 disordered regions span residues 242 to 278, 326 to 430, 455 to 484, and 673 to 743; these read EKKE…SNDD, TTTT…TPNR, INQQ…KSEP, and NNNN…NENE. The segment covering 251–264 has biased composition (basic and acidic residues); sequence DHDHDDKKKEKEDK. Positions 265 to 278 are enriched in acidic residues; it reads EKEEEEEEEDSNDD. Low complexity predominate over residues 326 to 345; the sequence is TTTTTVNGSKNSSNTTTPIT. Positions 362–373 are enriched in acidic residues; sequence DDDDDDDLTDED. Over residues 377 to 398 the composition is skewed to polar residues; sequence HNEIYSTSPKVSHSTFCQSSPT. 3 stretches are compositionally biased toward low complexity: residues 399 to 414, 455 to 480, and 673 to 729; these read LLDL…QQQQ, INQQ…SSNI, and NNNN…NQNE. Residues 732 to 743 show a composition bias toward basic and acidic residues; sequence NENKNENENENE.

This is an uncharacterized protein from Dictyostelium discoideum (Social amoeba).